We begin with the raw amino-acid sequence, 283 residues long: Lipoyl synthase (283 aa).

7 residues coordinate [4Fe-4S] cluster: Cys35, Cys40, Cys46, Cys61, Cys65, Cys68, and Ser273. The 216-residue stretch at Phe47–Lys262 folds into the Radical SAM core domain.

This sequence belongs to the radical SAM superfamily. Lipoyl synthase family. The cofactor is [4Fe-4S] cluster.

It localises to the cytoplasm. It catalyses the reaction [[Fe-S] cluster scaffold protein carrying a second [4Fe-4S](2+) cluster] + N(6)-octanoyl-L-lysyl-[protein] + 2 oxidized [2Fe-2S]-[ferredoxin] + 2 S-adenosyl-L-methionine + 4 H(+) = [[Fe-S] cluster scaffold protein] + N(6)-[(R)-dihydrolipoyl]-L-lysyl-[protein] + 4 Fe(3+) + 2 hydrogen sulfide + 2 5'-deoxyadenosine + 2 L-methionine + 2 reduced [2Fe-2S]-[ferredoxin]. The protein operates within protein modification; protein lipoylation via endogenous pathway; protein N(6)-(lipoyl)lysine from octanoyl-[acyl-carrier-protein]: step 2/2. Catalyzes the radical-mediated insertion of two sulfur atoms into the C-6 and C-8 positions of the octanoyl moiety bound to the lipoyl domains of lipoate-dependent enzymes, thereby converting the octanoylated domains into lipoylated derivatives. This chain is Lipoyl synthase, found in Geotalea uraniireducens (strain Rf4) (Geobacter uraniireducens).